The chain runs to 162 residues: Corticoliberin (162 aa).

Residues 1-24 form the signal peptide; it reads MKFQLWVSTGILLVSLLPCHECRA. The propeptide occupies 25–119; that stretch reads FIKSPASSPG…QEDPTEKAKR (95 aa). A disordered region spans residues 91-122; sequence SQPGMRAASLDGADSPYSAQEDPTEKAKRAEE. The span at 113–122 shows a compositional bias: basic and acidic residues; it reads PTEKAKRAEE. Ile-160 carries the post-translational modification Isoleucine amide.

It belongs to the sauvagine/corticotropin-releasing factor/urotensin I family.

The protein resides in the secreted. Its function is as follows. This hormone from hypothalamus regulates the release of corticotropin from pituitary gland. This chain is Corticoliberin (crh), found in Xenopus laevis (African clawed frog).